A 348-amino-acid polypeptide reads, in one-letter code: Cuticle collagen rol-6 (348 aa).

The interval Gly76–Leu348 is disordered. The span at Pro120–Gly137 shows a compositional bias: gly residues. Triple-helical region regions lie at residues Gly152–Asp178, Gly196–Arg258, Gly261–Asp284, and Gly288–Asp323. The span at Pro194–Pro231 shows a compositional bias: low complexity. Residues Gly297–Gly306 show a composition bias toward gly residues. Basic and acidic residues predominate over residues Lys322–Arg338. Positions Ser339 to Leu348 are enriched in basic residues.

The protein belongs to the cuticular collagen family. As to quaternary structure, collagen polypeptide chains are complexed within the cuticle by disulfide bonds and other types of covalent cross-links. As to expression, localizes in stripes along the alae.

Its function is as follows. Nematode cuticles are composed largely of collagen-like proteins. The cuticle functions both as an exoskeleton and as a barrier to protect the worm from its environment. May play a role in cuticle remodeling in response to the environment. Involved in body morphogenesis. The sequence is that of Cuticle collagen rol-6 (rol-6) from Caenorhabditis elegans.